The chain runs to 506 residues: Maturase K (506 aa).

Belongs to the intron maturase 2 family. MatK subfamily.

Its subcellular location is the plastid. The protein resides in the chloroplast. Usually encoded in the trnK tRNA gene intron. Probably assists in splicing its own and other chloroplast group II introns. This Jurinea cyanoides protein is Maturase K.